A 316-amino-acid polypeptide reads, in one-letter code: Probable cell division protein WhiA (316 aa).

The segment at residues 276-309 (SLEELGKIAEPQITKDAIAGRIRRLLQLAEKTEK) is a DNA-binding region (H-T-H motif).

This sequence belongs to the WhiA family.

Its function is as follows. Involved in cell division and chromosome segregation. The sequence is that of Probable cell division protein WhiA from Bifidobacterium longum subsp. infantis (strain ATCC 15697 / DSM 20088 / JCM 1222 / NCTC 11817 / S12).